The chain runs to 98 residues: uncharacterized protein (98 aa).

This is an uncharacterized protein from Bacillus subtilis (strain 168).